The following is a 155-amino-acid chain: SsrA-binding protein (155 aa).

This sequence belongs to the SmpB family.

The protein localises to the cytoplasm. In terms of biological role, required for rescue of stalled ribosomes mediated by trans-translation. Binds to transfer-messenger RNA (tmRNA), required for stable association of tmRNA with ribosomes. tmRNA and SmpB together mimic tRNA shape, replacing the anticodon stem-loop with SmpB. tmRNA is encoded by the ssrA gene; the 2 termini fold to resemble tRNA(Ala) and it encodes a 'tag peptide', a short internal open reading frame. During trans-translation Ala-aminoacylated tmRNA acts like a tRNA, entering the A-site of stalled ribosomes, displacing the stalled mRNA. The ribosome then switches to translate the ORF on the tmRNA; the nascent peptide is terminated with the 'tag peptide' encoded by the tmRNA and targeted for degradation. The ribosome is freed to recommence translation, which seems to be the essential function of trans-translation. The sequence is that of SsrA-binding protein from Geobacillus thermodenitrificans (strain NG80-2).